The chain runs to 264 residues: MPLVVKGKVNINEFIDLSKSEKLLPSMFTPVKSVMVSKVDKIMVHENESLSEVNLLKGVKLIEGGYVWLVGLVVSGEWNLPDNCRGGVSVCMVDKRMERADEATLGSYYTAAAKKRFQFKVVPNYGITTEDAEKNIWQVLVNIKNVKMSAGYCPLSLEFVSVCIVYKNNIKLGLREKVTSVNDGGPMELSEEVVDEFMENVPMSVRLAKFRTKSSKRGPKNNNNLGKGRSGGRPKPKSVDEVEEEFDNLIEDEAETSVADSDSY.

Residues 211–264 form a disordered region; it reads RTKSSKRGPKNNNNLGKGRSGGRPKPKSVDEVEEEFDNLIEDEAETSVADSDSY. Over residues 241–255 the composition is skewed to acidic residues; it reads EVEEEFDNLIEDEAE.

This sequence belongs to the tobamovirus movement protein family. As to quaternary structure, binds to host RBCS at the plasmodesmata; this interaction seems required for viral systemic movement. In resistant plants, interacts with host MBP2C at host microtubules; this interaction prevents virus cell to cell movement. In resistant plants, interacts with host resistance (R) protein (e.g. tomato ToMV resistance protein TM-2(2), AC Q71BG9) at the host plasma membrane; this interaction triggers host defense responses leading to programmed cell death.

Its subcellular location is the host cytoplasm. It localises to the host cytoskeleton. The protein localises to the host cell junction. It is found in the host plasmodesma. In terms of biological role, transports viral genome to neighboring plant cells directly through plasmosdesmata, without any budding. The movement protein allows efficient cell to cell propagation, by bypassing the host cell wall barrier. Forms a ribonucleoprotein complex with viral RNA. Binds microtubules and modulates microtubule stability. Can bind double-stranded DNA. Triggers host hypersensitive defense reaction in incompatible plants harboring resistance (R) proteins. The sequence is that of Movement protein (MP) from Antirrhinum majus (Garden snapdragon).